We begin with the raw amino-acid sequence, 598 residues long: NADH-quinone oxidoreductase subunit C/D (598 aa).

The interval 1-189 is NADH dehydrogenase I subunit C; it reads MTDLTTSDSL…DPYVLTKQKE (189 aa). The interval 213 to 598 is NADH dehydrogenase I subunit D; it reads DFMFLNLGPN…IDFVMSDVDR (386 aa).

It in the N-terminal section; belongs to the complex I 30 kDa subunit family. In the C-terminal section; belongs to the complex I 49 kDa subunit family. NDH-1 is composed of 13 different subunits. Subunits NuoB, CD, E, F, and G constitute the peripheral sector of the complex.

It localises to the cell inner membrane. The enzyme catalyses a quinone + NADH + 5 H(+)(in) = a quinol + NAD(+) + 4 H(+)(out). Its function is as follows. NDH-1 shuttles electrons from NADH, via FMN and iron-sulfur (Fe-S) centers, to quinones in the respiratory chain. The immediate electron acceptor for the enzyme in this species is believed to be ubiquinone. Couples the redox reaction to proton translocation (for every two electrons transferred, four hydrogen ions are translocated across the cytoplasmic membrane), and thus conserves the redox energy in a proton gradient. This chain is NADH-quinone oxidoreductase subunit C/D, found in Yersinia pseudotuberculosis serotype O:1b (strain IP 31758).